The chain runs to 600 residues: Potassium-transporting ATPase potassium-binding subunit (600 aa).

Transmembrane regions (helical) follow at residues 6 to 26 (IILL…LGTY), 65 to 85 (GYAI…YAVQ), 136 to 156 (ALSG…YALI), 179 to 199 (LYVL…QGVI), 283 to 303 (FSNL…CFTF), 314 to 334 (WAIL…VMGA), 367 to 387 (FGIS…CGAV), 419 to 439 (GLYG…LMIG), 458 to 478 (SLVI…AVVL), 523 to 543 (VMLA…VLAI), and 566 to 586 (LFIA…YVPA).

This sequence belongs to the KdpA family. The system is composed of three essential subunits: KdpA, KdpB and KdpC.

The protein localises to the cell inner membrane. Part of the high-affinity ATP-driven potassium transport (or Kdp) system, which catalyzes the hydrolysis of ATP coupled with the electrogenic transport of potassium into the cytoplasm. This subunit binds the periplasmic potassium ions and delivers the ions to the membrane domain of KdpB through an intramembrane tunnel. The sequence is that of Potassium-transporting ATPase potassium-binding subunit from Janthinobacterium sp. (strain Marseille) (Minibacterium massiliensis).